Reading from the N-terminus, the 127-residue chain is Large ribosomal subunit protein uL22 (127 aa).

The protein belongs to the universal ribosomal protein uL22 family. Part of the 50S ribosomal subunit.

In terms of biological role, this protein binds specifically to 23S rRNA; its binding is stimulated by other ribosomal proteins, e.g. L4, L17, and L20. It is important during the early stages of 50S assembly. It makes multiple contacts with different domains of the 23S rRNA in the assembled 50S subunit and ribosome. Its function is as follows. The globular domain of the protein is located near the polypeptide exit tunnel on the outside of the subunit, while an extended beta-hairpin is found that lines the wall of the exit tunnel in the center of the 70S ribosome. The protein is Large ribosomal subunit protein uL22 of Rhizorhabdus wittichii (strain DSM 6014 / CCUG 31198 / JCM 15750 / NBRC 105917 / EY 4224 / RW1) (Sphingomonas wittichii).